Reading from the N-terminus, the 186-residue chain is GPI-anchored hemophore ARB_02741 (186 aa).

The N-terminal stretch at 1–18 (MKFSQAVIALAAATVVSA) is a signal peptide. Residues 19–108 (QLPDVPQCSL…SSKPSEPSTS (90 aa)) enclose the CFEM domain. 4 cysteine pairs are disulfide-bonded: cysteine 26–cysteine 67, cysteine 30–cysteine 62, cysteine 40–cysteine 48, and cysteine 50–cysteine 83. Aspartate 45 lines the heme pocket. The interval 89–159 (PVSIPPVEES…NTGVPTQSTP (71 aa)) is disordered. Residues 96-131 (EESSSKPSEPSTSEAPTASPTESTPAPTTPAPTGTG) are compositionally biased toward low complexity. A compositionally biased stretch (gly residues) spans 132–144 (SPSGTGAPGGPSG). Residues 148-159 (FTNTGVPTQSTP) show a composition bias toward polar residues. Glycine 163 is lipidated: GPI-anchor amidated glycine. The propeptide at 164–186 (AASGLSANIGGMGAAILAIAAYL) is removed in mature form.

This sequence belongs to the RBT5 family. In terms of processing, the GPI-anchor is attached to the protein in the endoplasmic reticulum and serves to target the protein to the cell surface. There, the glucosamine-inositol phospholipid moiety is cleaved off and the GPI-modified mannoprotein is covalently attached via its lipidless GPI glycan remnant to the 1,6-beta-glucan of the outer cell wall layer.

It is found in the secreted. It localises to the cell wall. Its subcellular location is the cell membrane. In terms of biological role, GPI-anchored cell wall protein involved in stabilizing the cell wall. This is GPI-anchored hemophore ARB_02741 from Arthroderma benhamiae (strain ATCC MYA-4681 / CBS 112371) (Trichophyton mentagrophytes).